We begin with the raw amino-acid sequence, 432 residues long: MTSASTEPFFNRSLADTDPEIFGAIGKELGRQRHEIELIASENIVSRAVLEAQGSIMTNKYAEGYPGKRYYGGCQYVDIAEELAIERAKKLFGVNFANVQPNSGSQMNQAVFLALLQPGDTFMGLDLNSGGHLTHGSPVNMSGKWFNVVSYGVREGDNLLDMEAVQRKAEETKPKLIIAGGTAYSRIWDWKRFREIADSVGAYLMVDMAHIAGLVAGGQHPSPFPHCHVATTTTHKSLRGPRGGMILTNDEDLAKKFNSAVFPGLQGGPLMHVIAAKAVALGEALQPEFQDYAAQIVKNAKALSETLISGGVDVVSGGTDNHLMLVDLRKKNATGKRAEAALGRAYVTCNKNGIPFDPEKPFVTSGVRLGTPAGTTRGFKEAEFREIGNLIIEVLDGLKVANSDEGNAAVEAAVREKVIKLTDRFPMYGYMG.

(6S)-5,6,7,8-tetrahydrofolate is bound by residues Leu-127 and 131–133 (GHL). Residue Lys-236 is modified to N6-(pyridoxal phosphate)lysine.

The protein belongs to the SHMT family. Homodimer. It depends on pyridoxal 5'-phosphate as a cofactor.

It is found in the cytoplasm. The catalysed reaction is (6R)-5,10-methylene-5,6,7,8-tetrahydrofolate + glycine + H2O = (6S)-5,6,7,8-tetrahydrofolate + L-serine. It functions in the pathway one-carbon metabolism; tetrahydrofolate interconversion. Its pathway is amino-acid biosynthesis; glycine biosynthesis; glycine from L-serine: step 1/1. Functionally, catalyzes the reversible interconversion of serine and glycine with tetrahydrofolate (THF) serving as the one-carbon carrier. This reaction serves as the major source of one-carbon groups required for the biosynthesis of purines, thymidylate, methionine, and other important biomolecules. Also exhibits THF-independent aldolase activity toward beta-hydroxyamino acids, producing glycine and aldehydes, via a retro-aldol mechanism. The chain is Serine hydroxymethyltransferase from Rhizobium rhizogenes (strain K84 / ATCC BAA-868) (Agrobacterium radiobacter).